The primary structure comprises 349 residues: GMP reductase (349 aa).

108 to 131 lines the NADP(+) pocket; sequence LDFFKIKKIFSLSSELKYICIDVA. The K(+) site is built by glycine 181 and glycine 183. Cysteine 186 functions as the Thioimidate intermediate in the catalytic mechanism. 216 to 239 is an NADP(+) binding site; sequence IISDGGCTVSGDIAKAFGGGADFV.

This sequence belongs to the IMPDH/GMPR family. GuaC type 1 subfamily. Homotetramer.

It catalyses the reaction IMP + NH4(+) + NADP(+) = GMP + NADPH + 2 H(+). Functionally, catalyzes the irreversible NADPH-dependent deamination of GMP to IMP. It functions in the conversion of nucleobase, nucleoside and nucleotide derivatives of G to A nucleotides, and in maintaining the intracellular balance of A and G nucleotides. The protein is GMP reductase of Buchnera aphidicola subsp. Schizaphis graminum (strain Sg).